Reading from the N-terminus, the 357-residue chain is UDP-3-O-acylglucosamine N-acyltransferase (357 aa).

The Proton acceptor role is filled by H251.

This sequence belongs to the transferase hexapeptide repeat family. LpxD subfamily. In terms of assembly, homotrimer.

It carries out the reaction a UDP-3-O-[(3R)-3-hydroxyacyl]-alpha-D-glucosamine + a (3R)-hydroxyacyl-[ACP] = a UDP-2-N,3-O-bis[(3R)-3-hydroxyacyl]-alpha-D-glucosamine + holo-[ACP] + H(+). It participates in bacterial outer membrane biogenesis; LPS lipid A biosynthesis. Functionally, catalyzes the N-acylation of UDP-3-O-acylglucosamine using 3-hydroxyacyl-ACP as the acyl donor. Is involved in the biosynthesis of lipid A, a phosphorylated glycolipid that anchors the lipopolysaccharide to the outer membrane of the cell. In Ralstonia pickettii (strain 12J), this protein is UDP-3-O-acylglucosamine N-acyltransferase.